The chain runs to 546 residues: MNVQRPGLAVGPLFENPESESSEPGSPAAAARWVEASTEAEASAASSSQGQIVAAPTAEERPWEGRPQEAVSRTRAWREAGDVDEPLDLSFLSLTPLSIPLVSGLRRLNVNNNQLGDLPDTLPGTLLELEASENRLTRLPDLPAGLQRLNVENNRLTNLPEPLPAALEWLGAGYNQLTRLPEMIPPELIWLGARNNQLTSVPESLLTQLGQWSSIDLENNPLPHGVQTNLVTAMHAAGYAGPQIFLPMGPVELARRPLHEVVADWLEGDLETVAAWRGFANEQGARDYAHFLDRLRTTVNYGNDAFRQAVAIGLRQAVARPQLRAQYFEQASGASDSCEDRITLTWNGMQTALLIADVEDGVYDGSLHQLLQHGRVMFRLEALDGIARETVNSLRRTDPDADIDEIEVYLAYQTQLRDTLELRHVAPDMRFLNVSHVTEEDVARAASSVRELEARGFGEYVATRWQPWERVMRRIAPASHAAMQEQLIEAMGEEFRSRLDEKLAEHGLTGDADAERVFGAEILNDIARRIKGETMEKVLRGRGLEL.

The tract at residues 1–70 (MNVQRPGLAV…RPWEGRPQEA (70 aa)) is disordered. Positions 1–248 (MNVQRPGLAV…YAGPQIFLPM (248 aa)) are interaction with target proteins. The span at 22–48 (SEPGSPAAAARWVEASTEAEASAASSS) shows a compositional bias: low complexity. Residues 58–67 (AEERPWEGRP) show a composition bias toward basic and acidic residues. 5 LRR repeats span residues 104–125 (GLRR…LPGT), 126–144 (LLEL…DLPA), 145–166 (GLQR…LPAA), 167–186 (LEWL…MIPP), and 187–208 (ELIW…LLTQ). Residues 249-256 (GPVELARR) form a linker region. The NEL domain maps to 257-546 (PLHEVVADWL…KVLRGRGLEL (290 aa)). Positions 257-546 (PLHEVVADWL…KVLRGRGLEL (290 aa)) are E3 ubiquitin-protein ligase catalytic domain. Cys-338 functions as the Glycyl thioester intermediate in the catalytic mechanism.

It belongs to the LRR-containing bacterial E3 ligase family. In terms of processing, ubiquitinated in the presence of host E1 ubiquitin-activating enzyme, E2 ubiquitin-conjugating enzyme and ubiquitin.

It localises to the secreted. The protein resides in the host cytoplasm. Its function is as follows. Effector proteins function to alter host cell physiology and promote bacterial survival in host tissues. This protein is an E3 ubiquitin ligase that interferes with host's ubiquitination pathway. The sequence is that of Probable E3 ubiquitin-protein ligase NGR_a03640 from Sinorhizobium fredii (strain NBRC 101917 / NGR234).